The sequence spans 328 residues: Ferredoxin--NADP reductase 2 (328 aa).

Glu37, Gln45, Tyr50, Val90, Phe124, Asp285, and Thr325 together coordinate FAD.

Belongs to the ferredoxin--NADP reductase type 2 family. As to quaternary structure, homodimer. FAD is required as a cofactor.

The catalysed reaction is 2 reduced [2Fe-2S]-[ferredoxin] + NADP(+) + H(+) = 2 oxidized [2Fe-2S]-[ferredoxin] + NADPH. This is Ferredoxin--NADP reductase 2 from Latilactobacillus sakei subsp. sakei (strain 23K) (Lactobacillus sakei subsp. sakei).